Reading from the N-terminus, the 595-residue chain is Aspartate--tRNA ligase (595 aa).

E176 provides a ligand contact to L-aspartate. Positions 200–203 (QIFK) are aspartate. R222 lines the L-aspartate pocket. Residues 222–224 (RDE) and Q231 each bind ATP. Residue H450 participates in L-aspartate binding. Position 484 (E484) interacts with ATP. R491 contacts L-aspartate. 536–539 (GLDR) is a binding site for ATP.

This sequence belongs to the class-II aminoacyl-tRNA synthetase family. Type 1 subfamily. Homodimer.

It is found in the cytoplasm. The enzyme catalyses tRNA(Asp) + L-aspartate + ATP = L-aspartyl-tRNA(Asp) + AMP + diphosphate. Its function is as follows. Catalyzes the attachment of L-aspartate to tRNA(Asp) in a two-step reaction: L-aspartate is first activated by ATP to form Asp-AMP and then transferred to the acceptor end of tRNA(Asp). This Halalkalibacterium halodurans (strain ATCC BAA-125 / DSM 18197 / FERM 7344 / JCM 9153 / C-125) (Bacillus halodurans) protein is Aspartate--tRNA ligase.